The primary structure comprises 395 residues: 8-amino-3,8-dideoxy-alpha-D-manno-octulosonate transaminase (395 aa).

The residue at position 186 (Lys-186) is an N6-(pyridoxal phosphate)lysine.

Belongs to the DegT/DnrJ/EryC1 family. Pyridoxal 5'-phosphate is required as a cofactor.

The catalysed reaction is 8-amino-3,8-dideoxy-alpha-D-manno-octulosonate + 2-oxoglutarate = 3,8-dideoxy-8-oxo-alpha-D-manno-octulosonate + L-glutamate. It participates in bacterial outer membrane biogenesis; lipopolysaccharide biosynthesis. In terms of biological role, catalyzes the second (last) step of the biosynthesis of Kdo8N (8-amino-3,8-dideoxy-D-manno-octulosonate) from Kdo (3-deoxy-D-manno-octulosonate). The polypeptide is 8-amino-3,8-dideoxy-alpha-D-manno-octulosonate transaminase (Shewanella oneidensis (strain ATCC 700550 / JCM 31522 / CIP 106686 / LMG 19005 / NCIMB 14063 / MR-1)).